The chain runs to 312 residues: Ribonuclease HIII (312 aa).

Residues F95 to P311 enclose the RNase H type-2 domain. Residues D101, E102, and D206 each coordinate a divalent metal cation.

This sequence belongs to the RNase HII family. RnhC subfamily. Requires Mn(2+) as cofactor. Mg(2+) serves as cofactor.

It is found in the cytoplasm. It catalyses the reaction Endonucleolytic cleavage to 5'-phosphomonoester.. Its function is as follows. Endonuclease that specifically degrades the RNA of RNA-DNA hybrids. The polypeptide is Ribonuclease HIII (Staphylococcus aureus (strain Mu3 / ATCC 700698)).